We begin with the raw amino-acid sequence, 70 residues long: DNA gyrase inhibitor YacG (70 aa).

Residues Cys-9, Cys-12, Cys-28, and Cys-32 each coordinate Zn(2+). The tract at residues 43–70 (ESRKIPGSSIDPESIVTSNNKQDNVDEQ) is disordered.

Belongs to the DNA gyrase inhibitor YacG family. Interacts with GyrB. It depends on Zn(2+) as a cofactor.

Inhibits all the catalytic activities of DNA gyrase by preventing its interaction with DNA. Acts by binding directly to the C-terminal domain of GyrB, which probably disrupts DNA binding by the gyrase. The protein is DNA gyrase inhibitor YacG of Legionella pneumophila (strain Lens).